Reading from the N-terminus, the 522-residue chain is MLCALILWSGLLGAARASPISVPRECAKGSEVWCQDLQAAAKCRAVRHCQSAVWNKPTVKSLPCSVCQDVAAAAGNGVNPGATESDILTSVMKTCEWLPSQESSAKCKWMVNNHSAAVLSMLSGAQETDLASVCTALTLCEPLQRHLAETTSERPLTQEDANEVMAPFLSNGALSFHPSQMPEGAVCHDCVQLISLLQDALESNLTLAEVTVQNQCQSMGPGLAALCENYIHRQFVPAKQTLQGLPPQEVCRKGGFCERESAHWLTRVAAVDGVPSLEMEMPRTNELQMQLGLTCDVCLNLVQELDKWLVTNSTEALISHTLERVCTVVPEPLVQQCITLVDTYSPELVQLMSKVTPEKVCETIKLCGSKRRARSISRAVATTPSLPVDEENQGSFCQGCKRLLGMSSQNLDHKSTKRDILNAFKGGCRILPLPYVMQCNRFVAEYEPVLIESLKFMMNPTDLCKKMGACHGPKTPLLGTDQCVMGPSFWCKSPEAAEMCNALEHCQRLVWKKPVSKINEQP.

Residues methionine 1–alanine 17 form the signal peptide. A propeptide spanning residues serine 18–valine 59 is cleaved from the precursor. A Saposin A-type 1 domain is found at proline 19–valine 59. 4 Saposin B-type domains span residues lysine 60–glutamine 144, glutamate 183–serine 261, leucine 291–arginine 371, and glutamine 393–lysine 474. Intrachain disulfides connect cysteine 64-cysteine 140, cysteine 67-cysteine 134, and cysteine 95-cysteine 107. A propeptide spanning residues histidine 146–glutamate 183 is cleaved from the precursor. 3 disulfides stabilise this stretch: cysteine 187/cysteine 257, cysteine 190/cysteine 251, and cysteine 216/cysteine 227. A glycan (N-linked (GlcNAc...) asparagine) is linked at asparagine 204. Residues serine 261–glutamine 290 constitute a propeptide that is removed on maturation. Intrachain disulfides connect cysteine 295–cysteine 367, cysteine 298–cysteine 361, and cysteine 326–cysteine 337. N-linked (GlcNAc...) (high mannose) asparagine glycosylation occurs at asparagine 312. Positions arginine 371 to asparagine 392 are excised as a propeptide. Intrachain disulfides connect cysteine 397–cysteine 470, cysteine 400–cysteine 464, and cysteine 428–cysteine 439. The propeptide occupies threonine 475–proline 522. A Saposin A-type 2 domain is found at proline 476–serine 516.

The protein localises to the secreted. Functionally, may activate the lysosomal degradation of sphingolipids. The sequence is that of Proactivator polypeptide-like 1 (Psapl1) from Mus musculus (Mouse).